A 1031-amino-acid chain; its full sequence is MMS19 nucleotide excision repair protein homolog (1031 aa).

N-acetylalanine is present on Ala-2. 4 HEAT repeats span residues 867 to 905, 909 to 947, 950 to 988, and 991 to 1029; these read QRFF…RLPK, LPEL…EAPQ, SLHV…LPTS, and LPYK…LGSP. The residue at position 1028 (Ser-1028) is a Phosphoserine.

It belongs to the MET18/MMS19 family. As to quaternary structure, component of the CIA complex. In the CIA complex, interacts directly with CIAO2B and CIAO3. Component of the MMXD complex, composed of CIAO1, ERCC2, CIAO2B, MMS19 and SLC25A5. Interacts with CIAO2B; the interaction is direct. Interacts with ERCC2/XPD; the interaction is direct. Interacts with ERCC3/XPB and NCOA3/RAC3. Interacts with RTEL1; the interaction mediates the association of RTEL1 with the CIA complex. Interacts with BRIP1. Interacts with KIF4A; the interaction facilitates the transfer of Fe-S clusters to KIF4A to ensure proper localization of KIF4A to the mitotic machinery components. Interacts with CCDC117; the interaction is indirect. Post-translationally, ubiquitinated; undergoes 'Lys-48'-linked polyubiquitination. In terms of tissue distribution, ubiquitously expressed with higher expression in testis.

It is found in the nucleus. The protein localises to the cytoplasm. The protein resides in the cytoskeleton. Its subcellular location is the spindle. Its function is as follows. Key component of the cytosolic iron-sulfur protein assembly (CIA) complex, a multiprotein complex that mediates the incorporation of iron-sulfur cluster into apoproteins specifically involved in DNA metabolism and genomic integrity. In the CIA complex, MMS19 acts as an adapter between early-acting CIA components and a subset of cellular target Fe/S proteins such as ERCC2/XPD, FANCJ and RTEL1, thereby playing a key role in nucleotide excision repair (NER), homologous recombination-mediated double-strand break DNA repair, DNA replication and RNA polymerase II (POL II) transcription. As a CIA complex component and in collaboration with CIAO1 and CIAO2, binds to and facilitates the assembly of most cytosolic-nuclear Fe/S proteins. As part of the mitotic spindle-associated MMXD complex, plays a role in chromosome segregation, probably by facilitating iron-sulfur cluster assembly into ERCC2/XPD. Together with CIAO2, facilitates the transfer of Fe-S clusters to the motor protein KIF4A, which ensures proper localization of KIF4A to mitotic machinery components to promote the progression of mitosis. Indirectly acts as a transcriptional coactivator of estrogen receptor (ER), via its role in iron-sulfur insertion into some component of the TFIIH-machinery. In Mus musculus (Mouse), this protein is MMS19 nucleotide excision repair protein homolog.